A 325-amino-acid chain; its full sequence is Malate dehydrogenase (325 aa).

9 to 15 (GAAGAIG) lines the NAD(+) pocket. The substrate site is built by arginine 90 and arginine 96. Residues asparagine 103, glutamine 110, and 127–129 (VGN) each bind NAD(+). 2 residues coordinate substrate: asparagine 129 and arginine 160. The active-site Proton acceptor is the histidine 185.

This sequence belongs to the LDH/MDH superfamily. MDH type 2 family.

It catalyses the reaction (S)-malate + NAD(+) = oxaloacetate + NADH + H(+). Catalyzes the reversible oxidation of malate to oxaloacetate. The protein is Malate dehydrogenase of Rubrobacter xylanophilus (strain DSM 9941 / JCM 11954 / NBRC 16129 / PRD-1).